The sequence spans 77 residues: Large ribosomal subunit protein eL14 (77 aa).

This sequence belongs to the eukaryotic ribosomal protein eL14 family.

The protein is Large ribosomal subunit protein eL14 of Methanococcus maripaludis (strain C6 / ATCC BAA-1332).